The primary structure comprises 629 residues: tRNA uridine 5-carboxymethylaminomethyl modification enzyme MnmG (629 aa).

FAD-binding positions include 13-18 (GGGHAG), V125, and S180. Position 273–287 (273–287 (GPRYCPSIEDKVMRF)) interacts with NAD(+). Q370 serves as a coordination point for FAD.

This sequence belongs to the MnmG family. As to quaternary structure, homodimer. Heterotetramer of two MnmE and two MnmG subunits. The cofactor is FAD.

The protein localises to the cytoplasm. NAD-binding protein involved in the addition of a carboxymethylaminomethyl (cmnm) group at the wobble position (U34) of certain tRNAs, forming tRNA-cmnm(5)s(2)U34. This chain is tRNA uridine 5-carboxymethylaminomethyl modification enzyme MnmG, found in Salmonella dublin (strain CT_02021853).